An 827-amino-acid chain; its full sequence is Multiple RNA-binding domain-containing protein 1 (827 aa).

Residues 5–78 (SRIFVKNLPP…SRISVDIAKP (74 aa)) form the RRM 1 domain. Disordered regions lie at residues 77-116 (KPIA…TAAA), 176-230 (AGLE…ATDD), and 256-299 (AASG…DPES). Over residues 179–189 (EDGESDDEYED) the composition is skewed to acidic residues. Composition is skewed to low complexity over residues 208-225 (APLA…PVSL) and 256-270 (AASG…STSV). A compositionally biased stretch (basic and acidic residues) spans 277–288 (KPEEHPAEDSRE). RRM domains are found at residues 308–384 (SRLF…PAAA), 489–560 (TTIL…KGPK), 599–682 (SSLF…ASHR), and 704–781 (TKLV…FAQA).

It belongs to the RRM MRD1 family.

The protein localises to the nucleus. Its function is as follows. Involved in pre-rRNA processing. The sequence is that of Multiple RNA-binding domain-containing protein 1 (mrd-1) from Neurospora crassa (strain ATCC 24698 / 74-OR23-1A / CBS 708.71 / DSM 1257 / FGSC 987).